The following is a 126-amino-acid chain: Urease subunit beta (126 aa).

This sequence belongs to the urease beta subunit family. In terms of assembly, heterotrimer of UreA (gamma), UreB (beta) and UreC (alpha) subunits. Three heterotrimers associate to form the active enzyme.

Its subcellular location is the cytoplasm. The enzyme catalyses urea + 2 H2O + H(+) = hydrogencarbonate + 2 NH4(+). Its pathway is nitrogen metabolism; urea degradation; CO(2) and NH(3) from urea (urease route): step 1/1. In Gloeothece citriformis (strain PCC 7424) (Cyanothece sp. (strain PCC 7424)), this protein is Urease subunit beta.